A 117-amino-acid chain; its full sequence is Immunoglobulin lambda variable 2 (117 aa).

A signal peptide spans 1-19 (MAWTSLILSLLALCSGASS). Gln-20 carries the post-translational modification Pyrrolidone carboxylic acid. The 98-residue stretch at 20–117 (QAVVTQESAL…FCALWYSTHF (98 aa)) folds into the Ig-like domain.

This is Immunoglobulin lambda variable 2 from Mus musculus (Mouse).